A 387-amino-acid polypeptide reads, in one-letter code: 4-hydroxy-3-methylbut-2-en-1-yl diphosphate synthase (flavodoxin) (387 aa).

Cysteine 280, cysteine 283, cysteine 315, and glutamate 322 together coordinate [4Fe-4S] cluster.

It belongs to the IspG family. Requires [4Fe-4S] cluster as cofactor.

The enzyme catalyses (2E)-4-hydroxy-3-methylbut-2-enyl diphosphate + oxidized [flavodoxin] + H2O + 2 H(+) = 2-C-methyl-D-erythritol 2,4-cyclic diphosphate + reduced [flavodoxin]. It functions in the pathway isoprenoid biosynthesis; isopentenyl diphosphate biosynthesis via DXP pathway; isopentenyl diphosphate from 1-deoxy-D-xylulose 5-phosphate: step 5/6. Converts 2C-methyl-D-erythritol 2,4-cyclodiphosphate (ME-2,4cPP) into 1-hydroxy-2-methyl-2-(E)-butenyl 4-diphosphate. This is 4-hydroxy-3-methylbut-2-en-1-yl diphosphate synthase (flavodoxin) from Mycobacterium bovis (strain BCG / Pasteur 1173P2).